The following is a 426-amino-acid chain: Protein CgeD (426 aa).

This sequence to B.subtilis spore coat polysaccharide biosynthesis protein SpsA.

May be involved in maturation of the outermost layer of the spore. The sequence is that of Protein CgeD (cgeD) from Bacillus subtilis (strain 168).